A 143-amino-acid chain; its full sequence is Transcriptional regulator MraZ (143 aa).

SpoVT-AbrB domains are found at residues 5-47 (EYRH…TQEE) and 76-119 (ATEC…SEDR).

It belongs to the MraZ family. Forms oligomers.

It is found in the cytoplasm. The protein localises to the nucleoid. The chain is Transcriptional regulator MraZ from Ligilactobacillus salivarius (strain UCC118) (Lactobacillus salivarius).